Consider the following 94-residue polypeptide: Protein SpdA (94 aa).

A helical membrane pass occupies residues 41–68; sequence GPILLALVAAGGSVGVVMTLCLLLQTAA.

Its subcellular location is the cell membrane. Functionally, involved in plasmid transfer. In Streptomyces lividans, this protein is Protein SpdA (spdA).